The following is a 455-amino-acid chain: Fumarate hydratase class II (455 aa).

Residues 96–98, 122–125, 132–134, and Thr-180 each bind substrate; these read SGT, HPND, and SSN. His-181 acts as the Proton donor/acceptor in catalysis. Residue Ser-311 is part of the active site. Substrate contacts are provided by residues Ser-312 and 317–319; that span reads KVN.

It belongs to the class-II fumarase/aspartase family. Fumarase subfamily. In terms of assembly, homotetramer.

It localises to the cytoplasm. It catalyses the reaction (S)-malate = fumarate + H2O. It functions in the pathway carbohydrate metabolism; tricarboxylic acid cycle; (S)-malate from fumarate: step 1/1. Its function is as follows. Involved in the TCA cycle. Catalyzes the stereospecific interconversion of fumarate to L-malate. This is Fumarate hydratase class II from Listeria monocytogenes serotype 4b (strain F2365).